Here is a 489-residue protein sequence, read N- to C-terminus: Sphingolipid C9-methyltransferase (489 aa).

The next 2 membrane-spanning stretches (helical) occupy residues 29-49 and 59-79; these read GAKN…PLFV and TFIF…WTVL. S-adenosyl-L-methionine contacts are provided by residues 202–203, 239–247, 265–270, and 295–296; these read YT, LLDLGCGWG, TLGKNQ, and YR.

The protein belongs to the CFA/CMAS family.

Its subcellular location is the membrane. The enzyme catalyses a (4E,8E)-4-sphinga-4,8-dienine ceramide + S-adenosyl-L-methionine = a 9-methyl-(4E,8E)-sphinga-4,8-dienine ceramide + S-adenosyl-L-homocysteine + H(+). The protein operates within lipid metabolism; sphingolipid metabolism. Catalyzes methylation of the sphingoid base component of glucosylceramides (GluCers) at the C9-position. Sphingolipid C9-methylation requires 4,8-desaturated ceramides as substrates. Glucosylceramides play important roles in growth, differentiation and pathogenicity. The methyl group at the C9-position distinguishes fungal glucosylceramides from those of plants and animals, and may thus play a role in host-pathogen interactions enabling the host to recognize the fungal attack and initiate specific defense responses. The sequence is that of Sphingolipid C9-methyltransferase from Komagataella phaffii (strain GS115 / ATCC 20864) (Yeast).